The chain runs to 209 residues: MAVFKVLTPADIVAFSTGLIAGVDEVGRGPLVGDVVTAAVILDPNQPISGLNDSKKLSEKRREALFDEICEKALCYHIGRASPAEIDELNILHATMLAMQRAVAGLNLAPKLVLVDGNRSPFFSHNSQSIVSHSIIKGDGLIASISAASIIAKVTRDREMDALDAAYPQYGFAKHKGYPTKAHFEAIAEHGVFDQYRKSFKPVKALLEG.

In terms of domain architecture, RNase H type-2 spans 18-209 (GLIAGVDEVG…FKPVKALLEG (192 aa)). Residues D24, E25, and D116 each contribute to the a divalent metal cation site.

The protein belongs to the RNase HII family. Mn(2+) is required as a cofactor. It depends on Mg(2+) as a cofactor.

The protein localises to the cytoplasm. The catalysed reaction is Endonucleolytic cleavage to 5'-phosphomonoester.. Functionally, endonuclease that specifically degrades the RNA of RNA-DNA hybrids. In Shewanella putrefaciens (strain CN-32 / ATCC BAA-453), this protein is Ribonuclease HII.